We begin with the raw amino-acid sequence, 158 residues long: Endoribonuclease YbeY (158 aa).

Zn(2+) is bound by residues H119, H123, and H129.

It belongs to the endoribonuclease YbeY family. Zn(2+) is required as a cofactor.

It is found in the cytoplasm. In terms of biological role, single strand-specific metallo-endoribonuclease involved in late-stage 70S ribosome quality control and in maturation of the 3' terminus of the 16S rRNA. The protein is Endoribonuclease YbeY of Shewanella sediminis (strain HAW-EB3).